The primary structure comprises 476 residues: Serine/threonine-protein kinase PknF (476 aa).

2 positions are modified to phosphothreonine; by autocatalysis: T8 and T13. Residues 12 to 279 form the Protein kinase domain; sequence FTIVRQLGSG…FARALGHRLG (268 aa). ATP is bound by residues 18 to 26 and K41; that span reads LGSGGMGEV. The active-site Proton acceptor is the D137. Phosphothreonine; by autocatalysis occurs at positions 173, 175, and 287. Residue S290 is modified to Phosphoserine; by autocatalysis. Residues 332–376 form a disordered region; it reads ADDERAAQPARTRTTTSAGTTTSVAPASTTRPAPTTPTTTGAADT. Positions 338-376 are enriched in low complexity; it reads AQPARTRTTTSAGTTTSVAPASTTRPAPTTPTTTGAADT.

The protein belongs to the protein kinase superfamily. Ser/Thr protein kinase family. Dephosphorylated by PstP.

It carries out the reaction L-seryl-[protein] + ATP = O-phospho-L-seryl-[protein] + ADP + H(+). It catalyses the reaction L-threonyl-[protein] + ATP = O-phospho-L-threonyl-[protein] + ADP + H(+). The polypeptide is Serine/threonine-protein kinase PknF (pknF) (Mycobacterium bovis (strain ATCC BAA-935 / AF2122/97)).